The chain runs to 332 residues: Ferredoxin--NADP reductase (332 aa).

Positions 33, 41, 46, 86, 120, 286, and 327 each coordinate FAD.

It belongs to the ferredoxin--NADP reductase type 2 family. As to quaternary structure, homodimer. FAD is required as a cofactor.

The catalysed reaction is 2 reduced [2Fe-2S]-[ferredoxin] + NADP(+) + H(+) = 2 oxidized [2Fe-2S]-[ferredoxin] + NADPH. This chain is Ferredoxin--NADP reductase, found in Rickettsia bellii (strain OSU 85-389).